The primary structure comprises 155 residues: SsrA-binding protein (155 aa).

Residues lysine 132–arginine 147 are compositionally biased toward basic and acidic residues. The tract at residues lysine 132 to arginine 155 is disordered.

It belongs to the SmpB family.

The protein resides in the cytoplasm. Its function is as follows. Required for rescue of stalled ribosomes mediated by trans-translation. Binds to transfer-messenger RNA (tmRNA), required for stable association of tmRNA with ribosomes. tmRNA and SmpB together mimic tRNA shape, replacing the anticodon stem-loop with SmpB. tmRNA is encoded by the ssrA gene; the 2 termini fold to resemble tRNA(Ala) and it encodes a 'tag peptide', a short internal open reading frame. During trans-translation Ala-aminoacylated tmRNA acts like a tRNA, entering the A-site of stalled ribosomes, displacing the stalled mRNA. The ribosome then switches to translate the ORF on the tmRNA; the nascent peptide is terminated with the 'tag peptide' encoded by the tmRNA and targeted for degradation. The ribosome is freed to recommence translation, which seems to be the essential function of trans-translation. The polypeptide is SsrA-binding protein (Streptococcus mutans serotype c (strain ATCC 700610 / UA159)).